The sequence spans 499 residues: Myocyte-specific enhancer factor 2A (499 aa).

Positions 3 to 57 constitute an MADS-box domain; that stretch reads RKKIQITRIMDERNRQVTFTKRKFGLMKKAYELSVLCDCEIALIIFNSSNKLFQY. Residue lysine 4 is modified to N6-acetyllysine. Positions 58–86 form a DNA-binding region, mef2-type; sequence ASTDMDKVLLKYTEYNEPHESRTNSDIVE. Position 117 is an N6-acetyllysine (lysine 117). Residues 173-185 show a composition bias toward low complexity; it reads TSTTMLSPPQTTL. Positions 173–269 are disordered; it reads TSTTMLSPPQ…GGGLGMNNRK (97 aa). Residues 210–233 are compositionally biased toward polar residues; the sequence is TDLTVPNGAGTSPVGNGVWNSRAS. N6-acetyllysine occurs at positions 248, 253, 269, and 281. Residues 265–282 form a required for interaction with MAPKs region; the sequence is MNNRKPDLRVVIPPSSKG. The interval 288–295 is beta domain; the sequence is TEEDELEL. Positions 380–392 are enriched in low complexity; the sequence is VSGSQLSQGSNLS. The segment at 380 to 499 is disordered; it reads VSGSQLSQGS…KRMRMDTWVT (120 aa). Lysine 402 is modified (N6-acetyllysine; alternate). Lysine 402 is covalently cross-linked (Glycyl lysine isopeptide (Lys-Gly) (interchain with G-Cter in SUMO); alternate). Residues 421–436 are compositionally biased toward pro residues; sequence QQPPQQPQPPQPPQQP. Residues 445–458 are compositionally biased toward low complexity; the sequence is SPVDSLSSSSSSYD. Basic and acidic residues-rich tracts occupy residues 459–469 and 480–499; these read GSDREDPRSDF and NSED…TWVT.

In terms of assembly, binds DNA as a homo- or heterodimer. In terms of processing, sumoylation on Lys-402 is enhanced by PIAS1 and represses transcriptional activity. Has no effect on nuclear location nor on DNA binding. Sumoylated by SUMO1 and, to a lesser extent by SUMO2 and SUMO3. Acetylation on Lys-402 activates transcriptional activity. As to expression, expressed in both embryonic and adult tissues with high expression in heart and skeletal muscle. Also expressed in gut, lung and brain of 15 dpc embryos and adults.

Its subcellular location is the nucleus. Transcriptional activator which binds specifically to the MEF2 element, 5'-YTA[AT](4)TAR-3', found in numerous muscle-specific genes. Mediates cellular functions in skeletal and cardiac muscle development,. In Gallus gallus (Chicken), this protein is Myocyte-specific enhancer factor 2A (MEF2A).